The primary structure comprises 800 residues: Heterogeneous nuclear ribonucleoprotein U (800 aa).

At serine 2 the chain carries N-acetylserine. Serine 4 bears the Phosphoserine mark. One can recognise an SAP domain in the interval 8–42 (VKKLKVSELKEELKKRRLSDKGLKADLMDRLQAAL). An N6-acetyllysine mark is found at lysine 17 and lysine 21. The tract at residues 41 to 257 (ALDNEAGGRP…PQPPVEEEDE (217 aa)) is disordered. The residue at position 58 (serine 58) is a Phosphoserine. 2 stretches are compositionally biased toward low complexity: residues 71 to 80 (AGLEQEAAAG) and 103 to 113 (ENGAAGAADAG). Acidic residues-rich tracts occupy residues 114–128 (AMEE…ENGD) and 134–147 (EGED…EGAG). Positions 153–173 (GEQQSQPPAAAAQQQPSQQRG) are enriched in low complexity. Lysine 181 carries the post-translational modification N6-acetyllysine. Position 182 is an ADP-ribosylserine (serine 182). A compositionally biased stretch (low complexity) spans 194–205 (APPGARQGQQQA). Residues 209–242 (GKTEQKGGDKKRGVKRPREDHGRGYFEYIEENKY) show a composition bias toward basic and acidic residues. A Citrulline modification is found at arginine 231. Lysine 241 bears the N6-acetyllysine; alternate mark. Residue lysine 241 forms a Glycyl lysine isopeptide (Lys-Gly) (interchain with G-Cter in SUMO1); alternate linkage. Lysine 241 participates in a covalent cross-link: Glycyl lysine isopeptide (Lys-Gly) (interchain with G-Cter in SUMO2); alternate. The residue at position 242 (tyrosine 242) is a Phosphotyrosine. A phosphoserine mark is found at serine 243 and serine 247. Residues 244–440 (RAKSPQPPVE…VEFNFGQKEK (197 aa)) enclose the B30.2/SPRY domain. Threonine 262 bears the Phosphothreonine mark. Residue lysine 328 is modified to N6-acetyllysine. The interval 464-648 (PKGPEEKKDC…QKLLEQYKEE (185 aa)) is ATPase domain. Lysine 471 is covalently cross-linked (Glycyl lysine isopeptide (Lys-Gly) (interchain with G-Cter in SUMO2)). 480–487 (GLPGAGKT) serves as a coordination point for ATP. An N6-acetyllysine; alternate mark is found at lysine 492 and lysine 500. Residues lysine 492 and lysine 500 each participate in a glycyl lysine isopeptide (Lys-Gly) (interchain with G-Cter in SUMO2); alternate cross-link. Threonine 508 is modified (phosphothreonine). Lysine 512 is covalently cross-linked (Glycyl lysine isopeptide (Lys-Gly) (interchain with G-Cter in SUMO2)). Residue lysine 527 is modified to N6-acetyllysine. Lysine 541 bears the N6-acetyllysine; alternate mark. Lysine 541 is covalently cross-linked (Glycyl lysine isopeptide (Lys-Gly) (interchain with G-Cter in SUMO2); alternate). Lysine 550 participates in a covalent cross-link: Glycyl lysine isopeptide (Lys-Gly) (interchain with G-Cter in SUMO2). Residue threonine 558 is modified to Phosphothreonine. Glycyl lysine isopeptide (Lys-Gly) (interchain with G-Cter in SUMO2) cross-links involve residues lysine 585 and lysine 602. The tract at residues 587–602 (EDYKQRTQKKAEVEGK) is actin-binding. An N6-acetyllysine; alternate modification is found at lysine 611. A Glycyl lysine isopeptide (Lys-Gly) (interchain with G-Cter in SUMO2); alternate cross-link involves residue lysine 611. Residues 626–653 (DEITYVELQKEEAQKLLEQYKEESKKAL) adopt a coiled-coil conformation. Glycyl lysine isopeptide (Lys-Gly) (interchain with G-Cter in SUMO2) cross-links involve residues lysine 640 and lysine 646. Over residues 647–659 (EESKKALPPEKKQ) the composition is skewed to basic and acidic residues. The disordered stretch occupies residues 647–729 (EESKKALPPE…GSGGIGYPYP (83 aa)). An Omega-N-methylarginine modification is found at arginine 678. Over residues 686–704 (GGFNMRGGNFRGGAPGNRG) the composition is skewed to gly residues. Positions 690 to 715 (MRGGNFRGGAPGNRGGYNRRGNMPQR) are RNA-binding RGG-box. Arginine 691, arginine 696, and arginine 703 each carry asymmetric dimethylarginine. Asymmetric dimethylarginine; alternate occurs at positions 709 and 715. An omega-N-methylarginine; alternate mark is found at arginine 709 and arginine 715. Residues 715-725 (RGGGGGSGGIG) show a composition bias toward gly residues. Asymmetric dimethylarginine is present on residues arginine 730 and arginine 737. The interval 745-774 (NYNRGGMPNRGNYNQNFRGRGNNRGYKNQS) is disordered. At lysine 789 the chain carries N6-acetyllysine; alternate. Lysine 789 participates in a covalent cross-link: Glycyl lysine isopeptide (Lys-Gly) (interchain with G-Cter in SUMO2); alternate.

Oligomer (via ATPase domain and RNA-binding RGG-box region); oligomerization occurs upon ATP-binding in a chromatin-associated RNAs (caRNAs)- and transcription-dependent manner and is required for chromatin decompaction. ATP hydrolysis is required to cycle from an oligomeric to monomeric state to compact chromatin. Component of the coding region determinant (CRD)-mediated complex, composed of DHX9, HNRNPU, IGF2BP1, SYNCRIP and YBX1. Identified in the spliceosome C complex. Identified in a IGF2BP1-dependent mRNP granule complex containing untranslated mRNAs. Associates with heterogeneous nuclear ribonucleoprotein (hnRNP) particles. Associates (via middle region) with the C-terminal domain (CTD) RNA polymerase II (Pol II) holoenzyme; this association occurs in a RNA-independent manner. Associates (via middle region) with the core-TFIIH basal transcription factor complex; this association inhibits the CTD phosphorylation of RNA polymerase II holoenzyme by down-regulating TFIIH kinase activity. Associates with the telomerase holoenzyme complex. Associates with spindle microtubules (MTs) in a TPX2-dependent manner. Interacts (via C-terminus) with actin; this interaction is direct and mediates association with the phosphorylated CTD of RNA polymerase II and is disrupted in presence of the long non-coding H19 RNA. Interacts with AURKA. Interacts (via C-terminus) with CBX5; this interaction is, at least in part, RNA-dependent. Interacts with CR2. Interacts with CRY1. Interacts (via C-terminus) with EP300; this interaction enhances DNA-binding to nuclear scaffold/matrix attachment region (S/MAR) elements. Interacts with ERBB4. Interacts with GEMIN5. Interacts with IGF2BP1. Interacts with IGF2BP2 and IGF2BP3. Interacts with NCL; this interaction occurs during mitosis. Interacts (via C-terminus) with NR3C1 (via C-terminus). Interacts with PLK1; this interaction induces phosphorylation of HNRNPU at Ser-58 in mitosis. Interacts with POU3F4. Interacts with SMARCA4; this interaction occurs in embryonic stem cells and stimulates global Pol II-mediated transcription. Interacts (via C-terminus) with TOP2A; this interaction protects the topoisomerase TOP2A from degradation and positively regulates the relaxation of supercoiled DNA by TOP2A in a RNA-dependent manner. Interacts with TPX2; this interaction recruits HNRNPU to spindle microtubules (MTs). Interacts with UBQLN2. Interacts (via RNA-binding RGG-box region) with ZBTB7B; the interaction facilitates the recruitment of long non-coding RNA Blnc1 by ZBTB7B. Interacts with ERCC6. In terms of processing, cleaved at Asp-94 by CASP3 during T-cell apoptosis, resulting in a loss of DNA- and chromatin-binding activities. Extensively phosphorylated. Phosphorylated on Ser-58 by PLK1 and dephosphorylated by protein phosphatase 2A (PP2A) in mitosis. Post-translationally, arg-709 and Arg-715 are dimethylated, probably to asymmetric dimethylarginine. In terms of processing, citrullinated by PADI4.

The protein resides in the nucleus. It is found in the nucleus matrix. The protein localises to the chromosome. It localises to the nucleus speckle. Its subcellular location is the cytoplasm. The protein resides in the cytoskeleton. It is found in the microtubule organizing center. The protein localises to the centrosome. It localises to the centromere. Its subcellular location is the kinetochore. The protein resides in the spindle. It is found in the spindle pole. The protein localises to the midbody. It localises to the cell surface. Its subcellular location is the cytoplasmic granule. Functionally, DNA- and RNA-binding protein involved in several cellular processes such as nuclear chromatin organization, telomere-length regulation, transcription, mRNA alternative splicing and stability, Xist-mediated transcriptional silencing and mitotic cell progression. Plays a role in the regulation of interphase large-scale gene-rich chromatin organization through chromatin-associated RNAs (caRNAs) in a transcription-dependent manner, and thereby maintains genomic stability. Required for the localization of the long non-coding Xist RNA on the inactive chromosome X (Xi) and the subsequent initiation and maintenance of X-linked transcriptional gene silencing during X-inactivation. Plays a role as a RNA polymerase II (Pol II) holoenzyme transcription regulator. Promotes transcription initiation by direct association with the core-TFIIH basal transcription factor complex for the assembly of a functional pre-initiation complex with Pol II in a actin-dependent manner. Blocks Pol II transcription elongation activity by inhibiting the C-terminal domain (CTD) phosphorylation of Pol II and dissociates from Pol II pre-initiation complex prior to productive transcription elongation. Positively regulates CBX5-induced transcriptional gene silencing and retention of CBX5 in the nucleus. Negatively regulates glucocorticoid-mediated transcriptional activation. Key regulator of transcription initiation and elongation in embryonic stem cells upon leukemia inhibitory factor (LIF) signaling. Involved in the long non-coding RNA H19-mediated Pol II transcriptional repression. Participates in the circadian regulation of the core clock component BMAL1 transcription. Plays a role in the regulation of telomere length. Plays a role as a global pre-mRNA alternative splicing modulator by regulating U2 small nuclear ribonucleoprotein (snRNP) biogenesis. Plays a role in mRNA stability. Component of the CRD-mediated complex that promotes MYC mRNA stabilization. Enhances the expression of specific genes, such as tumor necrosis factor TNFA, by regulating mRNA stability, possibly through binding to the 3'-untranslated region (UTR). Plays a role in mitotic cell cycle regulation. Involved in the formation of stable mitotic spindle microtubules (MTs) attachment to kinetochore, spindle organization and chromosome congression. Phosphorylation at Ser-58 by PLK1 is required for chromosome alignement and segregation and progression through mitosis. Also contributes to the targeting of AURKA to mitotic spindle MTs. Binds to double- and single-stranded DNA and RNA, poly(A), poly(C) and poly(G) oligoribonucleotides. Binds to chromatin-associated RNAs (caRNAs). Associates with chromatin to scaffold/matrix attachment region (S/MAR) elements in a chromatin-associated RNAs (caRNAs)-dependent manner. Binds (via RNA-binding RGG-box region) to the long non-coding Xist RNA; this binding is direct and bridges the Xist RNA and the inactive chromosome X (Xi). Binds the long non-coding H19 RNA. Binds to SMN1/2 pre-mRNAs at G/U-rich regions. Binds to small nuclear RNAs (snRNAs). Binds to the 3'-UTR of TNFA mRNA. Also negatively regulates embryonic stem cell differentiation upon LIF signaling. Required for embryonic development. Binds to brown fat long non-coding RNA 1 (Blnc1); facilitates the recruitment of Blnc1 by ZBTB7B required to drive brown and beige fat development and thermogenesis. This Mus musculus (Mouse) protein is Heterogeneous nuclear ribonucleoprotein U.